Here is a 501-residue protein sequence, read N- to C-terminus: Aspartate--tRNA ligase, cytoplasmic (501 aa).

Threonine 52 carries the post-translational modification Phosphothreonine. The residue at position 74 (lysine 74) is an N6-acetyllysine. Residue glutamate 229 coordinates L-aspartate. Residue serine 249 is modified to Phosphoserine. The tract at residues 251-254 (QLYK) is aspartate. Residue arginine 273 coordinates L-aspartate. Residues 273–275 (RAE) and 281–283 (RHL) each bind ATP. Residue lysine 374 is modified to N6-acetyllysine. A binding site for the 3'-end of tRNA region spans residues 411–415 (KQSNS). Glutamate 424 provides a ligand contact to ATP. L-aspartate is bound by residues serine 427 and arginine 431. 472 to 475 (GLER) contributes to the ATP binding site. Threonine 500 carries the post-translational modification Phosphothreonine; by PKA.

It belongs to the class-II aminoacyl-tRNA synthetase family. Type 2 subfamily. In terms of assembly, homodimer. Part of a multisubunit complex that groups tRNA ligases for Arg (RARS1), Asp (DARS1), Gln (QARS1), Ile (IARS1), Leu (LARS1), Lys (KARS1), Met (MARS1) the bifunctional ligase for Glu and Pro (EPRS1) and the auxiliary subunits AIMP1/p43, AIMP2/p38 and EEF1E1/p18. As to expression, expression in the developing and adult brain shows similar patterns. Highly expressed in the ventricular and subventricular zones, including hippocampal subfields, the midlateral temporal cortex and the frontal polar cortex. The cerebellum, cerebral cortex, hippocampus, and lateral ventricle show preferential neuronal expression. Expression in the peripheral neurons is evident in the colon.

The protein resides in the cytoplasm. It localises to the cytosol. It catalyses the reaction tRNA(Asp) + L-aspartate + ATP = L-aspartyl-tRNA(Asp) + AMP + diphosphate. Functionally, catalyzes the specific attachment of an amino acid to its cognate tRNA in a 2 step reaction: the amino acid (AA) is first activated by ATP to form AA-AMP and then transferred to the acceptor end of the tRNA. This chain is Aspartate--tRNA ligase, cytoplasmic, found in Homo sapiens (Human).